Reading from the N-terminus, the 317-residue chain is tRNA(Ile)-lysidine synthase (317 aa).

Residue 30–35 (SGGSDS) coordinates ATP.

It belongs to the tRNA(Ile)-lysidine synthase family.

It localises to the cytoplasm. It catalyses the reaction cytidine(34) in tRNA(Ile2) + L-lysine + ATP = lysidine(34) in tRNA(Ile2) + AMP + diphosphate + H(+). Its function is as follows. Ligates lysine onto the cytidine present at position 34 of the AUA codon-specific tRNA(Ile) that contains the anticodon CAU, in an ATP-dependent manner. Cytidine is converted to lysidine, thus changing the amino acid specificity of the tRNA from methionine to isoleucine. The sequence is that of tRNA(Ile)-lysidine synthase from Chlamydia caviae (strain ATCC VR-813 / DSM 19441 / 03DC25 / GPIC) (Chlamydophila caviae).